The sequence spans 365 residues: 2-aminoethylphosphonate--pyruvate transaminase (365 aa).

Lysine 194 is subject to N6-(pyridoxal phosphate)lysine.

Belongs to the class-V pyridoxal-phosphate-dependent aminotransferase family. PhnW subfamily. In terms of assembly, homodimer. The cofactor is pyridoxal 5'-phosphate.

It carries out the reaction (2-aminoethyl)phosphonate + pyruvate = phosphonoacetaldehyde + L-alanine. In terms of biological role, involved in phosphonate degradation. The polypeptide is 2-aminoethylphosphonate--pyruvate transaminase (Bacillus cereus (strain G9842)).